The following is a 520-amino-acid chain: Hydroxymethylglutaryl-CoA synthase, cytoplasmic (520 aa).

A Phosphoserine modification is found at Ser4. Asp43 and Ala44 together coordinate (3S)-3-hydroxy-3-methylglutaryl-CoA. Residue 44 to 46 participates in CoA binding; that stretch reads AGK. Lys46 bears the N6-acetyllysine mark. The active-site Proton donor/acceptor is the Glu95. Residues Cys129, Asn167, Thr171, Ser221, and His264 each coordinate (3S)-3-hydroxy-3-methylglutaryl-CoA. Catalysis depends on Cys129, which acts as the Acyl-thioester intermediate. Asn167 serves as a coordination point for CoA. Residue Ser221 participates in CoA binding. His264 (proton donor/acceptor) is an active-site residue. CoA is bound by residues Lys269 and Lys273. The (3S)-3-hydroxy-3-methylglutaryl-CoA site is built by Lys273, Asn343, and Ser377. The residue at position 273 (Lys273) is an N6-acetyllysine. The segment at 486–520 is disordered; sequence SNTATEHIPSPAKKVPRLPATAAESESAVISNGEH. Residues Ser495 and Ser516 each carry the phosphoserine modification.

Belongs to the thiolase-like superfamily. HMG-CoA synthase family. In terms of assembly, homodimer.

Its subcellular location is the cytoplasm. It catalyses the reaction acetoacetyl-CoA + acetyl-CoA + H2O = (3S)-3-hydroxy-3-methylglutaryl-CoA + CoA + H(+). It participates in metabolic intermediate biosynthesis; (R)-mevalonate biosynthesis; (R)-mevalonate from acetyl-CoA: step 2/3. Functionally, this enzyme condenses acetyl-CoA with acetoacetyl-CoA to form HMG-CoA, which is converted by HMG-CoA reductase (HMGCR) into mevalonate, a precursor for cholesterol synthesis. This is Hydroxymethylglutaryl-CoA synthase, cytoplasmic from Cricetulus griseus (Chinese hamster).